Reading from the N-terminus, the 113-residue chain is Large ribosomal subunit protein uL22 (113 aa).

It belongs to the universal ribosomal protein uL22 family. As to quaternary structure, part of the 50S ribosomal subunit.

In terms of biological role, this protein binds specifically to 23S rRNA; its binding is stimulated by other ribosomal proteins, e.g. L4, L17, and L20. It is important during the early stages of 50S assembly. It makes multiple contacts with different domains of the 23S rRNA in the assembled 50S subunit and ribosome. Functionally, the globular domain of the protein is located near the polypeptide exit tunnel on the outside of the subunit, while an extended beta-hairpin is found that lines the wall of the exit tunnel in the center of the 70S ribosome. This chain is Large ribosomal subunit protein uL22, found in Halalkalibacterium halodurans (strain ATCC BAA-125 / DSM 18197 / FERM 7344 / JCM 9153 / C-125) (Bacillus halodurans).